An 82-amino-acid chain; its full sequence is Sulfur carrier protein TusA (82 aa).

C20 functions as the Cysteine persulfide intermediate in the catalytic mechanism.

It belongs to the sulfur carrier protein TusA family.

It is found in the cytoplasm. In terms of biological role, sulfur carrier protein which probably makes part of a sulfur-relay system. The protein is Sulfur carrier protein TusA of Aeromonas hydrophila subsp. hydrophila (strain ATCC 7966 / DSM 30187 / BCRC 13018 / CCUG 14551 / JCM 1027 / KCTC 2358 / NCIMB 9240 / NCTC 8049).